The primary structure comprises 174 residues: MEGDGGVQLTQSPDSLTEEDVCVIQDTWKPVYAERDNAGVAVLVRFFTNFPSAKQYFEHFRELQDPAEMQQNAQLKEHGQRVLNALNTLVENLRDADKLNTIFNQMGKSHALRHKVDPVYFKILAGVILEVLVEAFPQCFSPAEVQSSWSKLMGILYWQMNRVYAEVGWENSKK.

Residues 15–165 (SLTEEDVCVI…LYWQMNRVYA (151 aa)) form the Globin domain. 2 residues coordinate heme b: His-78 and His-110.

Belongs to the globin family. As to quaternary structure, monomeric. In terms of tissue distribution, expressed in all tissues examined with highest levels in brain, eye, gut and heart.

Its subcellular location is the cytoplasm. The protein resides in the nucleus. The enzyme catalyses Fe(II)-heme b-[protein] + nitric oxide + O2 = Fe(III)-heme b-[protein] + nitrate. It catalyses the reaction Fe(III)-heme b-[protein] + nitric oxide + H2O = Fe(II)-heme b-[protein] + nitrite + 2 H(+). It carries out the reaction 2 superoxide + 2 H(+) = H2O2 + O2. The catalysed reaction is H2O2 + AH2 = A + 2 H2O. Its function is as follows. Probable multifunctional globin with a hexacoordinated heme iron required for the catalysis of various reactions depending on redox condition of the cell as well as oxygen availability. Has a nitric oxide dioxygenase (NOD) activity and is most probably involved in cell-mediated and oxygen-dependent nitric oxide consumption. Under normoxic conditions functions as a nitric oxide dioxygenase (NOD) but under hypoxic conditions the globin may switch its function to that of a nitrite (NO2) reductase (NiR), generating nitric oxide. Could also have peroxidase and superoxide dismutase activities, detoxifying reactive oxygen species and protecting cells against oxidative stress. Also binds dioxygen with low affinity and could function as an oxygen sensor but has probably no function as a respiratory oxygen carrier. The sequence is that of Cytoglobin-1 (cygb1) from Danio rerio (Zebrafish).